A 367-amino-acid polypeptide reads, in one-letter code: 4-hydroxy-3-methylbut-2-en-1-yl diphosphate synthase (flavodoxin) (367 aa).

Residues Cys265, Cys268, Cys300, and Glu307 each coordinate [4Fe-4S] cluster.

Belongs to the IspG family. Requires [4Fe-4S] cluster as cofactor.

It carries out the reaction (2E)-4-hydroxy-3-methylbut-2-enyl diphosphate + oxidized [flavodoxin] + H2O + 2 H(+) = 2-C-methyl-D-erythritol 2,4-cyclic diphosphate + reduced [flavodoxin]. It functions in the pathway isoprenoid biosynthesis; isopentenyl diphosphate biosynthesis via DXP pathway; isopentenyl diphosphate from 1-deoxy-D-xylulose 5-phosphate: step 5/6. In terms of biological role, converts 2C-methyl-D-erythritol 2,4-cyclodiphosphate (ME-2,4cPP) into 1-hydroxy-2-methyl-2-(E)-butenyl 4-diphosphate. The sequence is that of 4-hydroxy-3-methylbut-2-en-1-yl diphosphate synthase (flavodoxin) from Bacillus cereus (strain ATCC 10987 / NRS 248).